The chain runs to 368 residues: Peptide chain release factor 2 (368 aa).

The disordered stretch occupies residues 36-56; it reads EAQAGDPSLWDDPDHAQKVTS. Residue Gln250 is modified to N5-methylglutamine.

Belongs to the prokaryotic/mitochondrial release factor family. Methylated by PrmC. Methylation increases the termination efficiency of RF2.

It is found in the cytoplasm. In terms of biological role, peptide chain release factor 2 directs the termination of translation in response to the peptide chain termination codons UGA and UAA. This is Peptide chain release factor 2 from Corynebacterium aurimucosum (strain ATCC 700975 / DSM 44827 / CIP 107346 / CN-1) (Corynebacterium nigricans).